The primary structure comprises 107 residues: EMBRYO SURROUNDING FACTOR 1-like protein 5 (107 aa).

Positions 1-22 are cleaved as a signal peptide; that stretch reads MSLLRFAILCIIFVSLFGVHEC. Disulfide bonds link Cys35/Cys49, Cys40/Cys69, Cys47/Cys65, and Cys50/Cys58. Residues 87–107 form a helical membrane-spanning segment; it reads GLGPPIYLFFLGQFIYFVLGL.

Belongs to the MEG family. In terms of tissue distribution, expressed in flowers.

The protein resides in the membrane. In Arabidopsis thaliana (Mouse-ear cress), this protein is EMBRYO SURROUNDING FACTOR 1-like protein 5 (ESFL5).